Here is a 474-residue protein sequence, read N- to C-terminus: Glutamate--tRNA ligase (474 aa).

Residues 18–28 (PSPTGFLHIGG) carry the 'HIGH' region motif. A 'KMSKS' region motif is present at residues 244-248 (KLSKR). K247 contacts ATP.

The protein belongs to the class-I aminoacyl-tRNA synthetase family. Glutamate--tRNA ligase type 1 subfamily. As to quaternary structure, monomer.

Its subcellular location is the cytoplasm. The enzyme catalyses tRNA(Glu) + L-glutamate + ATP = L-glutamyl-tRNA(Glu) + AMP + diphosphate. Functionally, catalyzes the attachment of glutamate to tRNA(Glu) in a two-step reaction: glutamate is first activated by ATP to form Glu-AMP and then transferred to the acceptor end of tRNA(Glu). This Caulobacter sp. (strain K31) protein is Glutamate--tRNA ligase.